Here is a 128-residue protein sequence, read N- to C-terminus: Type III secretion protein HrcQb (128 aa).

Positions 1–21 are enriched in acidic residues; that stretch reads MSTEDLYQEDVEMLDDYEDPS. Positions 1 to 57 are disordered; that stretch reads MSTEDLYQEDVEMLDDYEDPSTEQHWSEEDGEPSGYATAEPDDHAAQEEQDEPPALD. Residues 50–128 form a hrcQb-C region; sequence QDEPPALDSL…LQITRLVTRS (79 aa). The dimer-dimer interface stretch occupies residues 78–81; the sequence is RRLD.

The protein belongs to the FliN/MopA/SpaO family. Homotetramer. The four monomers assemble into two tightly bound homodimers. Interacts with HrcQa.

The protein localises to the cytoplasm. In terms of biological role, component of the type III secretion system, which is required for effector protein delivery, parasitism, and pathogenicity. Probably participates in the formation of a C-ring-like assembly along with HrcQa. The chain is Type III secretion protein HrcQb (hrcQb) from Pseudomonas savastanoi pv. phaseolicola (Pseudomonas syringae pv. phaseolicola).